Here is a 354-residue protein sequence, read N- to C-terminus: COP9 signalosome complex subunit 5 (354 aa).

Positions 56–193 (VLVSSIALVK…IGAFRTYPKD (138 aa)) constitute an MPN domain. Zn(2+) is bound by residues His-139, His-141, and Asp-152. The short motif at 139–152 (HSHPGYGCWLSGID) is the JAMM motif element. The tract at residues 193–212 (DYKPPKKATKQNQDQSVPLS) is disordered.

It belongs to the peptidase M67A family. CSN5 subfamily. Component of the COP9 signalosome (CSN) complex.

It localises to the cytoplasm. The protein localises to the nucleus. In terms of biological role, catalytic Component of the COP9 signalosome (CSN) complex that acts as an regulator of the ubiquitin (Ubl) conjugation pathway by mediating the deneddylation of the cullin subunit of SCF-type E3 ubiquitin-protein ligase complexes. The polypeptide is COP9 signalosome complex subunit 5 (RRI1) (Yarrowia lipolytica (strain CLIB 122 / E 150) (Yeast)).